Here is a 748-residue protein sequence, read N- to C-terminus: Catalase-peroxidase (748 aa).

A cross-link (tryptophyl-tyrosyl-methioninium (Trp-Tyr) (with M-255)) is located at residues 96-229 (WHSAGTYRVA…LAAAHMGLIY (134 aa)). Catalysis depends on His-97, which acts as the Proton acceptor. The tryptophyl-tyrosyl-methioninium (Tyr-Met) (with W-96) cross-link spans 229 to 255 (YVNPEGPDGNPDPIAAAKDIRTTFGRM). His-270 serves as a coordination point for heme b.

Belongs to the peroxidase family. Peroxidase/catalase subfamily. As to quaternary structure, homodimer or homotetramer. The cofactor is heme b. Formation of the three residue Trp-Tyr-Met cross-link is important for the catalase, but not the peroxidase activity of the enzyme.

It is found in the cytoplasm. It carries out the reaction H2O2 + AH2 = A + 2 H2O. The enzyme catalyses 2 H2O2 = O2 + 2 H2O. Its function is as follows. Bifunctional enzyme with both catalase and broad-spectrum peroxidase activity. Plays a crucial role in oxidative stress response during infection. Acts as an antigen and elicits antibody response in P.marneffei-infected AIDS patients, healthy people working in mycological laboratory, and healthy people in an endemic area. This Talaromyces marneffei (Penicillium marneffei) protein is Catalase-peroxidase.